The chain runs to 292 residues: Medium chain reductase/dehydrogenase ucsI (292 aa).

C43 lines the Zn(2+) pocket. Y49 is a binding site for substrate. Zn(2+) is bound by residues H65 and E66. NAD(+) contacts are provided by residues 184–189, D208, R213, and 276–278; these read GCGPVG and IGA.

It belongs to the zinc-containing alcohol dehydrogenase family. The cofactor is Zn(2+).

It functions in the pathway mycotoxin biosynthesis. In terms of biological role, medium chain reductase/dehydrogenase; part of the gene cluster that mediates the biosynthesis of UCS1025A, a member of the pyrrolizidinone family that acts as a strong telomerase inhibitor and displays potent antibacterial and antitumor properties. These compounds share a hemiaminal-containing pyrrolizidinone core fused with a gamma-lactone, giving a furopyrrolizidine that is connected to a decalin fragment. The polyketide synthase module (PKS) of the PKS-NRPS ucsA is responsible for the synthesis of the polyketide backbone via the condensation of an acetyl-CoA starter unit with 6 malonyl-CoA units. The downstream nonribosomal peptide synthetase (NRPS) module then amidates the carboxyl end of the polyketide with a 2S,3S-methylproline derived from L-isoleucine by the 2-oxoglutarate-dependent dioxygenase ucsF which converts L-isoleucine to (4S,5S)-4-methylpyrroline-5-carboxylate that is further converted to 2S,3S-methylproline by the pyrroline-5-carboxylate reductase ucsG. Reductive release of the completed aminoacyl polyketide from the assembly line can form the 3-pyrrolin-2-one structure via an intramolecular Knoevenagel reaction. Because ucsA lacks a designated enoylreductase (ER) domain, the required activity is provided the enoyl reductase ucsL. This keto acyclic precursor is the substrate of the Diels-Alderase ucsH, that catalyzes the Diels-Alder cycloaddition. Oxidation of the 3S-methyl group to a carboxylate by the cytochrome P450 monooxygenase ucsK allows an oxa-Michael cyclization that might involve the reductase/dehydrogenase ucsI and which furnishes the furopyrrolizidine. The oxidase ucsJ likely plays a critical role in stereoselective reduction of the C5-C6 double bond to afford the required R-configured carboxylate group. Further enolization and oxidation at C5 by an unidentified enzyme affords the last intermediate that can undergo oxa-Michael cyclization to yield UCS1025A. In Acremonium sp, this protein is Medium chain reductase/dehydrogenase ucsI.